The sequence spans 379 residues: MTSETSVNLLDFDAEGLVAYCGSLGEKPFRAKQLQRWIHQYNAGDFDGMTDLAKSLREKLKGRASIVMPEIASDHVSTDGTRKWLIDVGNGNAVETVFIPEETRGTLCVSSQAGCAVNCRFCSTGKQGFSRNLSTAEIIGQLRMAEFALRASLGRAPGPNGKAERVVTNVVMMGMGEPLLNYSAVVPAMRLMLDDNAYGLSRRRVTLSTSGVVPMMDRLGAELPVALAVSLHAPNDALRDELVPLNKKYPLRELMAACQRYLKVAPRDFITFEYCMLDGVNDTEAHARELLAVTRDVPCKFNLIPFNPFPESGLIRSKPEQIKRFAQVLIDAGVVTTVRKTRGDDIDAACGQLAGAVKDRTRLAERTGAAGKIIEVRAV.

Glutamate 95 (proton acceptor) is an active-site residue. Positions 101 to 345 constitute a Radical SAM core domain; sequence EETRGTLCVS…TTVRKTRGDD (245 aa). Cysteine 108 and cysteine 350 form a disulfide bridge. The [4Fe-4S] cluster site is built by cysteine 115, cysteine 119, and cysteine 122. S-adenosyl-L-methionine-binding positions include 176–177, serine 208, 230–232, and asparagine 307; these read GE and SLH. Cysteine 350 (S-methylcysteine intermediate) is an active-site residue.

The protein belongs to the radical SAM superfamily. RlmN family. [4Fe-4S] cluster is required as a cofactor.

It localises to the cytoplasm. It carries out the reaction adenosine(2503) in 23S rRNA + 2 reduced [2Fe-2S]-[ferredoxin] + 2 S-adenosyl-L-methionine = 2-methyladenosine(2503) in 23S rRNA + 5'-deoxyadenosine + L-methionine + 2 oxidized [2Fe-2S]-[ferredoxin] + S-adenosyl-L-homocysteine. The catalysed reaction is adenosine(37) in tRNA + 2 reduced [2Fe-2S]-[ferredoxin] + 2 S-adenosyl-L-methionine = 2-methyladenosine(37) in tRNA + 5'-deoxyadenosine + L-methionine + 2 oxidized [2Fe-2S]-[ferredoxin] + S-adenosyl-L-homocysteine. Its function is as follows. Specifically methylates position 2 of adenine 2503 in 23S rRNA and position 2 of adenine 37 in tRNAs. m2A2503 modification seems to play a crucial role in the proofreading step occurring at the peptidyl transferase center and thus would serve to optimize ribosomal fidelity. In Burkholderia cenocepacia (strain ATCC BAA-245 / DSM 16553 / LMG 16656 / NCTC 13227 / J2315 / CF5610) (Burkholderia cepacia (strain J2315)), this protein is Dual-specificity RNA methyltransferase RlmN.